Here is a 934-residue protein sequence, read N- to C-terminus: Oxysterol-binding protein-related protein 6 (934 aa).

The segment at 1 to 62 (MSSDEKGISP…RQLLEPEPVP (62 aa)) is disordered. Position 2 is an N-acetylserine (S2). Residues 14 to 29 (TSTPTHRSASSSTSSQ) are compositionally biased toward low complexity. Positions 30–40 (RDSRQSIHILE) are enriched in basic and acidic residues. At S35 the chain carries Phosphoserine. The span at 42–53 (TASSSTEPSVSR) shows a compositional bias: polar residues. Residues 86–181 (PDKHEGFMLK…WVSKLRHHRL (96 aa)) form the PH domain. 2 positions are modified to phosphoserine: S190 and S290.

The protein belongs to the OSBP family. As to quaternary structure, homodimer. Interacts with OSBPL3. As to expression, expressed in brain and striated muscle (at protein level). Widely expressed. Expressed in skeletal muscle.

Its subcellular location is the cytoplasm. The protein resides in the cytosol. It is found in the endoplasmic reticulum membrane. The protein localises to the nucleus envelope. It localises to the cell membrane. Its subcellular location is the endosome membrane. Functionally, regulates cellular transport and efflux of cholesterol. Plays a role in phosphatidylinositol-4-phophate (PI4P) turnover at the neuronal membrane. Binds via its PH domain PI4P, phosphatidylinositol-4,5-diphosphate, phosphatidylinositol-3,4,5-triphosphate, and phosphatidic acid. Weakly binds 25-hydroxycholesterol. This Homo sapiens (Human) protein is Oxysterol-binding protein-related protein 6 (OSBPL6).